A 323-amino-acid polypeptide reads, in one-letter code: ADP/ATP translocase 4 (323 aa).

Residues 1–23 are Mitochondrial intermembrane-facing; that stretch reads MQREPPKRKQEKKVEKGLFDATS. Residues 22–114 form a Solcar 1 repeat; it reads TSFGKDLLAG…FAFKDKYKQL (93 aa). Residues 24–53 traverse the membrane as a helical segment; the sequence is FGKDLLAGGVAAAVSKTTVAPIERVKLLLQ. The Mitochondrial matrix segment spans residues 54–90; it reads VQASSKQISPEAQYKGIVDCLVRIPREQGFLSYWRGN. Residues 91 to 115 traverse the membrane as a helical segment; that stretch reads LANVIRYFPTQALNFAFKDKYKQLF. Residues arginine 96 and lysine 108 each coordinate ADP. Topologically, residues 116-125 are mitochondrial intermembrane; sequence MSGVNKEKQF. A helical transmembrane segment spans residues 126 to 146; sequence WRWFLANLASGGAAGATSLCV. Solcar repeat units follow at residues 127-217 and 224-311; these read RWFL…VKGL and THFL…IKDL. Residues 147–194 lie on the Mitochondrial matrix side of the membrane; the sequence is VYPLDFARTRLGADIGKGPEERQFKGLGDCIMKIAKSDGIVGLYQGFG. Residues 195 to 215 form a helical membrane-spanning segment; that stretch reads VSVQGIIVYRASYFGAYDTVK. The Mitochondrial intermembrane segment spans residues 216-226; sequence GLLPKPKETHF. Residues 227 to 247 form a helical membrane-spanning segment; the sequence is LVSFFIAQVVTTCSGILSYPF. Over 248–287 the chain is Mitochondrial matrix; that stretch reads DTVRRRMMMQSGEAERQYKGTLDCFMKIYQQEGIGAFFRG. Arginine 251 serves as a coordination point for ADP. Residues 251-256 are important for transport activity; it reads RRRMMM. The Nucleotide carrier signature motif motif lies at 251–256; the sequence is RRRMMM. Residues 288–305 form a helical membrane-spanning segment; the sequence is AFSNILRGTGGALVLVLY. Over 306-323 the chain is Mitochondrial intermembrane; the sequence is DKIKDLLNIDIGGSSSGD.

This sequence belongs to the mitochondrial carrier (TC 2.A.29) family. As to quaternary structure, monomer.

Its subcellular location is the mitochondrion inner membrane. It localises to the membrane. The protein resides in the cell projection. The protein localises to the cilium. It is found in the flagellum membrane. The catalysed reaction is ADP(in) + ATP(out) = ADP(out) + ATP(in). The enzyme catalyses dATP(out) + ADP(in) = dATP(in) + ADP(out). It catalyses the reaction dADP(in) + ADP(out) = dADP(out) + ADP(in). It carries out the reaction H(+)(in) = H(+)(out). The matrix-open state (m-state) is inhibited by the membrane-permeable bongkrekic acid (BKA). The cytoplasmic-open state (c-state) is inhibited by the membrane-impermeable toxic inhibitor carboxyatractyloside (CATR). Proton transporter activity is inhibited by ADP:ATP antiporter activity. Its function is as follows. ADP:ATP antiporter that mediates import of ADP into the mitochondrial matrix for ATP synthesis, and export of ATP out to fuel the cell. Cycles between the cytoplasmic-open state (c-state) and the matrix-open state (m-state): operates by the alternating access mechanism with a single substrate-binding site intermittently exposed to either the cytosolic (c-state) or matrix (m-state) side of the inner mitochondrial membrane. Specifically required during spermatogenesis, probably to mediate ADP:ATP exchange in spermatocytes. Large ATP supplies from mitochondria may be critical for normal progression of spermatogenesis during early stages of meiotic prophase I, including DNA double-strand break repair and chromosomal synapsis. In addition to its ADP:ATP antiporter activity, also involved in mitochondrial uncoupling and mitochondrial permeability transition pore (mPTP) activity. Plays a role in mitochondrial uncoupling by acting as a proton transporter: proton transport uncouples the proton flows via the electron transport chain and ATP synthase to reduce the efficiency of ATP production and cause mitochondrial thermogenesis. Proton transporter activity is inhibited by ADP:ATP antiporter activity, suggesting that SLC25A31/ANT4 acts as a master regulator of mitochondrial energy output by maintaining a delicate balance between ATP production (ADP:ATP antiporter activity) and thermogenesis (proton transporter activity). Proton transporter activity requires free fatty acids as cofactor, but does not transport it. Among nucleotides, may also exchange ADP for dATP and dADP. Also plays a key role in mPTP opening, a non-specific pore that enables free passage of the mitochondrial membranes to solutes of up to 1.5 kDa, and which contributes to cell death. It is however unclear if SLC25A31/ANT4 constitutes a pore-forming component of mPTP or regulates it. This chain is ADP/ATP translocase 4, found in Bos taurus (Bovine).